The following is a 1181-amino-acid chain: MVKSAASQSPSPVTITVTPCKGSGDRSLGLTSPIPRASVITNQNSPLSSRATRRTSISSGNRRSNGDEGRYCSMSVEDLTAETTNSECVLSYTVHIPPTPDHQTVFASQESEEDEMLKGNSNQKSFLSGTIFTGGFKSVTRGHVIDCSMDRADPEKKSGQICWLKGCDEKVVHGRCECGFRICRDCYFDCITSGGGNCPGCKEPYRDINDDPETEEEDEEDEAKPLPQMGESKLDKRLSVVKSFKAQNQAGDFDHTRWLFETKGTYGYGNAVWPKDGYGIGSGGGGNGYETPPEFGERSKRPLTRKVSVSAAIISPYRLLIALRLVALGLFLTWRVRHPNREAMWLWGMSTTCELWFALSWLLDQLPKLCPVNRLTDLGVLKERFESPNLRNPKGRSDLPGIDVFVSTADPEKEPPLVTANTILSILAVDYPVEKLACYLSDDGGALLTFEALAQTASFASTWVPFCRKHNIEPRNPEAYFGQKRNFLKNKVRLDFVRERRRVKREYDEFKVRINSLPEAIRRRSDAYNVHEELRAKKKQMEMMMGNNPQETVIVPKATWMSDGSHWPGTWSSGETDNSRGDHAGIIQAMLAPPNAEPVYGAEADAENLIDTTDVDIRLPMLVYVSREKRPGYDHNKKAGAMNALVRTSAIMSNGPFILNLDCDHYIYNSMALREGMCFMLDRGGDRICYVQFPQRFEGIDPNDRYANHNTVFFDVSMRALDGLQGPMYVGTGCIFRRTALYGFSPPRATEHHGWLGRRKVKISLRRPKAMMKKDDEVSLPINGEYNEEENDDGDIESLLLPKRFGNSNSFVASIPVAEYQGRLIQDLQGKGKNSRPAGSLAVPREPLDAATVAEAISVISCFYEDKTEWGKRVGWIYGSVTEDVVTGYRMHNRGWRSIYCVTKRDAFRGTAPINLTDRLHQVLRWATGSVEIFFSRNNAIFATRRMKFLQRVAYFNVGMYPFTSLFLIVYCILPAISLFSGQFIVQSLDITFLIYLLSITLTLCMLSLLEIKWSGITLHEWWRNEQFWVIGGTSAHPAAVLQGLLKVIAGVDISFTLTSKSSAPEDGDDEFADLYVVKWSFLMVPPLTIMMVNMIAIAVGLARTLYSPFPQWSKLVGGVFFSFWVLCHLYPFAKGLMGRRGRVPTIVFVWSGLLSIIVSLLWVYINPPSGKQDYMQFQFP.

The segment covering 1-17 (MVKSAASQSPSPVTITV) has biased composition (polar residues). Disordered stretches follow at residues 1–70 (MVKS…DEGR) and 202–229 (KEPYRDINDDPETEEEDEEDEAKPLPQM). The segment covering 48 to 59 (SSRATRRTSISS) has biased composition (low complexity). Acidic residues predominate over residues 210-222 (DDPETEEEDEEDE). Transmembrane regions (helical) follow at residues 312–332 (AIISPYRLLIALRLVALGLFL) and 343–363 (AMWLWGMSTTCELWFALSWLL). The active site involves Asp-443. The stretch at 497–542 (VRERRRVKREYDEFKVRINSLPEAIRRRSDAYNVHEELRAKKKQME) forms a coiled coil. Residue Asp-884 is part of the active site. 6 helical membrane passes run 966–986 (LFLIVYCILPAISLFSGQFIV), 991–1011 (ITFLIYLLSITLTLCMLSLLE), 1038–1058 (PAAVLQGLLKVIAGVDISFTL), 1082–1102 (FLMVPPLTIMMVNMIAIAVGL), 1116–1136 (LVGGVFFSFWVLCHLYPFAKG), and 1146–1166 (TIVFVWSGLLSIIVSLLWVYI).

This sequence belongs to the glycosyltransferase 2 family. Plant cellulose synthase-like D subfamily. Expressed in vascular tissues.

The protein localises to the golgi apparatus membrane. Functionally, involved in stem and root growth. Possesses xylan and homogalacturonan synthase activity. The chain is Cellulose synthase-like protein D5 (CSLD5) from Arabidopsis thaliana (Mouse-ear cress).